The primary structure comprises 870 residues: Aldehyde-alcohol dehydrogenase 2 (870 aa).

Cysteine 252 is an active-site residue. 431 to 436 (GCGSYG) is a binding site for NAD(+).

The protein in the N-terminal section; belongs to the aldehyde dehydrogenase family. This sequence in the C-terminal section; belongs to the iron-containing alcohol dehydrogenase family. In terms of assembly, seems to form a rod shaped homomer composed of at least 20 identical subunits. Zn(2+) is required as a cofactor. Fe(2+) serves as cofactor.

It catalyses the reaction a primary alcohol + NAD(+) = an aldehyde + NADH + H(+). The catalysed reaction is a secondary alcohol + NAD(+) = a ketone + NADH + H(+). It carries out the reaction acetaldehyde + NAD(+) + CoA = acetyl-CoA + NADH + H(+). In terms of biological role, this enzyme has two NAD(+)-dependent activities: ADH and ACDH. May be a critical enzyme in the fermentative pathway. This is Aldehyde-alcohol dehydrogenase 2 (ADH2) from Entamoeba histolytica (strain ATCC 30459 / HM-1:IMSS / ABRM).